The sequence spans 67 residues: uncharacterized protein (67 aa).

A helical transmembrane segment spans residues 12–34; the sequence is YYYAHQTVCITSTGFALCFVVQA.

It is found in the membrane. This is an uncharacterized protein from Saccharomyces cerevisiae (strain ATCC 204508 / S288c) (Baker's yeast).